The following is a 1113-amino-acid chain: Antigenic protein P1 (1113 aa).

The helical transmembrane segment at 7-27 (IIAVVAIASAIVTGVVVIVVV) threads the bilayer. N-linked (GlcNAc...) asparagine glycans are attached at residues Asn121, Asn207, Asn225, Asn233, Asn274, Asn533, Asn576, Asn622, Asn675, Asn679, Asn730, Asn753, Asn880, Asn899, Asn907, Asn972, and Asn995. The 315-residue stretch at 159-473 (VFGQRAVAWA…SYVNMAHAFG (315 aa)) folds into the Peptidase M60 domain. One can recognise a PA14 domain in the interval 648–800 (LDPHQVEYEV…TEESSVDVSK (153 aa)).

It localises to the membrane. The sequence is that of Antigenic protein P1 from Entamoeba histolytica (strain ATCC 30459 / HM-1:IMSS / ABRM).